The chain runs to 129 residues: Phosphoribosyl-AMP cyclohydrolase (129 aa).

Asp84 lines the Mg(2+) pocket. Cys85 contacts Zn(2+). Residues Asp86 and Asp88 each contribute to the Mg(2+) site. The Zn(2+) site is built by Cys101 and Cys108.

It belongs to the PRA-CH family. As to quaternary structure, homodimer. Mg(2+) is required as a cofactor. The cofactor is Zn(2+).

The protein localises to the cytoplasm. The enzyme catalyses 1-(5-phospho-beta-D-ribosyl)-5'-AMP + H2O = 1-(5-phospho-beta-D-ribosyl)-5-[(5-phospho-beta-D-ribosylamino)methylideneamino]imidazole-4-carboxamide. The protein operates within amino-acid biosynthesis; L-histidine biosynthesis; L-histidine from 5-phospho-alpha-D-ribose 1-diphosphate: step 3/9. Its function is as follows. Catalyzes the hydrolysis of the adenine ring of phosphoribosyl-AMP. In Halobacterium salinarum (strain ATCC 700922 / JCM 11081 / NRC-1) (Halobacterium halobium), this protein is Phosphoribosyl-AMP cyclohydrolase.